A 417-amino-acid polypeptide reads, in one-letter code: NADH-quinone oxidoreductase subunit D (417 aa).

This sequence belongs to the complex I 49 kDa subunit family. NDH-1 is composed of 14 different subunits. Subunits NuoB, C, D, E, F, and G constitute the peripheral sector of the complex.

Its subcellular location is the cell inner membrane. It carries out the reaction a quinone + NADH + 5 H(+)(in) = a quinol + NAD(+) + 4 H(+)(out). Functionally, NDH-1 shuttles electrons from NADH, via FMN and iron-sulfur (Fe-S) centers, to quinones in the respiratory chain. The immediate electron acceptor for the enzyme in this species is believed to be ubiquinone. Couples the redox reaction to proton translocation (for every two electrons transferred, four hydrogen ions are translocated across the cytoplasmic membrane), and thus conserves the redox energy in a proton gradient. The chain is NADH-quinone oxidoreductase subunit D from Ralstonia pickettii (strain 12J).